Consider the following 291-residue polypeptide: ATP synthase gamma chain (291 aa).

The protein belongs to the ATPase gamma chain family. In terms of assembly, F-type ATPases have 2 components, CF(1) - the catalytic core - and CF(0) - the membrane proton channel. CF(1) has five subunits: alpha(3), beta(3), gamma(1), delta(1), epsilon(1). CF(0) has three main subunits: a, b and c.

It localises to the cell inner membrane. In terms of biological role, produces ATP from ADP in the presence of a proton gradient across the membrane. The gamma chain is believed to be important in regulating ATPase activity and the flow of protons through the CF(0) complex. In Caulobacter vibrioides (strain NA1000 / CB15N) (Caulobacter crescentus), this protein is ATP synthase gamma chain.